The chain runs to 508 residues: Metalloprotease TIKI1 (508 aa).

A signal peptide spans 1–23 (MVIIWNIFLPAFLLVLAKASLRS). The Extracellular portion of the chain corresponds to 24–485 (SRDSANCKLN…KYIKAAQSVS (462 aa)). Asparagine 219, asparagine 228, asparagine 277, and asparagine 335 each carry an N-linked (GlcNAc...) asparagine glycan. The helical transmembrane segment at 486 to 506 (FSLSIPSAFLLLAWCFQQVAV) threads the bilayer. At 507–508 (LQ) the chain is on the cytoplasmic side.

The protein belongs to the TIKI family. Mn(2+) is required as a cofactor. Co(2+) serves as cofactor. In terms of tissue distribution, zygotically expressed in the Spemann-Mangold organizer, in particular in the head Spemann-Mangold organizer region responsible for anterior patterning.

The protein localises to the cell membrane. Functionally, metalloprotease that acts as a negative regulator of the Wnt signaling pathway: expressed in the Spemann-Mangold organizer and is required for anterior-neural patterning in head formation in embryos. Acts by mediating the cleavage of the N-terminal residues of a subset of Wnt proteins. Following cleavage, Wnt proteins become oxidized and form large disulfide-bond oligomers, leading to their inactivation. Able to cleave wnt8. The protein is Metalloprotease TIKI1 (trabd2a) of Xenopus tropicalis (Western clawed frog).